The primary structure comprises 330 residues: UPF0353 protein MAP_3434 (330 aa).

2 consecutive transmembrane segments (helical) span residues glycine 21–alanine 41 and leucine 63–threonine 83. Residues valine 94–isoleucine 289 enclose the VWFA domain. The helical transmembrane segment at alanine 304–isoleucine 324 threads the bilayer.

Belongs to the UPF0353 family.

The protein resides in the cell membrane. The sequence is that of UPF0353 protein MAP_3434 from Mycolicibacterium paratuberculosis (strain ATCC BAA-968 / K-10) (Mycobacterium paratuberculosis).